A 357-amino-acid polypeptide reads, in one-letter code: O-methyltransferase 9 (357 aa).

5 residues coordinate S-adenosyl-L-methionine: G200, D224, N249, F250, and K263. Residue H267 is the Proton acceptor of the active site.

The protein belongs to the class I-like SAM-binding methyltransferase superfamily. Cation-independent O-methyltransferase family. COMT subfamily.

The enzyme catalyses (3,5-dichloro-2,4,6-trihydroxyphenyl)hexan-1-one + S-adenosyl-L-methionine = 1-(3,5-dichloro-2,6-dihydroxy-4-methoxyphenyl)hexan-1-one + S-adenosyl-L-homocysteine + H(+). This is O-methyltransferase 9 (omt9) from Dictyostelium discoideum (Social amoeba).